Reading from the N-terminus, the 373-residue chain is Velvet complex subunit RYP3 (373 aa).

The segment covering 1–10 (MYTLKQDRPH) has biased composition (basic and acidic residues). Disordered stretches follow at residues 1–26 (MYTL…LQHG) and 344–373 (RKDG…ENEG). A Velvet domain is found at 48–344 (VYEGRIYSLD…AFQGIKIPIR (297 aa)). Positions 364–373 (GEGEDWENEG) are enriched in acidic residues.

The protein belongs to the velvet family. VelB subfamily. In terms of assembly, component of the heterotrimeric velvet complex composed of LAE1, VEL1 and VEL2; VEL1A acting as a bridging protein between LAE1 and VEL2. Forms a heterodimeric complex with VOS1; the formation of the VEL2-VOS1 complex is light-dependent.

It localises to the nucleus. It is found in the cytoplasm. Functionally, component of the velvet transcription factor complex that controls sexual/asexual developmental ratio in response to light, promoting sexual development in the darkness while stimulating asexual sporulation under illumination. The velvet complex acts as a global regulator for secondary metabolite gene expression. Component of the RYP2-RYP3 heterodimeric complex that plays a dual role in activating genes associated with spore maturation and repressing certain development-associated genes. The complex binds DNA through the DNA-binding domain of RYP2 that recognizes an 11-nucleotide consensus sequence 5'-CTGGCCGCGGC-3' consisting of two motifs in the promoters of key developmental regulatory genes. Required for viable spore production and regulation of sporulation in response to temperature, as well as for the switch to yeast-form in the presence of host cells. The chain is Velvet complex subunit RYP3 (RYP3) from Ajellomyces capsulatus (Darling's disease fungus).